The sequence spans 379 residues: Cytochrome b (379 aa).

Transmembrane regions (helical) follow at residues 33–53, 77–98, 113–133, and 178–198; these read FGSLLGICLILQILTGLFLAM, WMIRYMHANGASLFFICLFMHV, WNIGILLLLTVMATAFMGYVL, and FFAFHFILPFIISALAAVHLL. Residues His83 and His97 each contribute to the heme b site. Heme b is bound by residues His182 and His196. His201 lines the a ubiquinone pocket. Transmembrane regions (helical) follow at residues 226–246, 288–308, 320–340, and 347–367; these read IKDILGLLFLILALMLLVLFS, LGGVLPHAMSILILPIIPMLH, LSQCMFWLLVADLPILTWIGG, and FITIGQLASVYISSILLXLMP.

The protein belongs to the cytochrome b family. In terms of assembly, the cytochrome bc1 complex contains 11 subunits: 3 respiratory subunits (MT-CYB, CYC1 and UQCRFS1), 2 core proteins (UQCRC1 and UQCRC2) and 6 low-molecular weight proteins (UQCRH/QCR6, UQCRB/QCR7, UQCRQ/QCR8, UQCR10/QCR9, UQCR11/QCR10 and a cleavage product of UQCRFS1). This cytochrome bc1 complex then forms a dimer. The cofactor is heme b.

It is found in the mitochondrion inner membrane. Component of the ubiquinol-cytochrome c reductase complex (complex III or cytochrome b-c1 complex) that is part of the mitochondrial respiratory chain. The b-c1 complex mediates electron transfer from ubiquinol to cytochrome c. Contributes to the generation of a proton gradient across the mitochondrial membrane that is then used for ATP synthesis. This Chrotogale owstoni (Owston's palm civet) protein is Cytochrome b (MT-CYB).